The following is a 702-amino-acid chain: Polyribonucleotide nucleotidyltransferase (702 aa).

Positions 486 and 492 each coordinate Mg(2+). A KH domain is found at 553–612 (PSMATIKIDPEKIRDVIGKGGATIRSITEQTGASIDLDDDGTVRIYAADKASSDAALLKI). An S1 motif domain is found at 622-690 (DKLYKGKVVR…ARGRIKLSMK (69 aa)).

The protein belongs to the polyribonucleotide nucleotidyltransferase family. As to quaternary structure, component of the RNA degradosome, which is a multiprotein complex involved in RNA processing and mRNA degradation. Requires Mg(2+) as cofactor.

The protein localises to the cytoplasm. It carries out the reaction RNA(n+1) + phosphate = RNA(n) + a ribonucleoside 5'-diphosphate. Functionally, involved in mRNA degradation. Catalyzes the phosphorolysis of single-stranded polyribonucleotides processively in the 3'- to 5'-direction. The polypeptide is Polyribonucleotide nucleotidyltransferase (Marinomonas sp. (strain MWYL1)).